The sequence spans 94 residues: Co-chaperonin GroES (94 aa).

It belongs to the GroES chaperonin family. In terms of assembly, heptamer of 7 subunits arranged in a ring. Interacts with the chaperonin GroEL.

The protein resides in the cytoplasm. In terms of biological role, together with the chaperonin GroEL, plays an essential role in assisting protein folding. The GroEL-GroES system forms a nano-cage that allows encapsulation of the non-native substrate proteins and provides a physical environment optimized to promote and accelerate protein folding. GroES binds to the apical surface of the GroEL ring, thereby capping the opening of the GroEL channel. The sequence is that of Co-chaperonin GroES from Streptococcus pneumoniae (strain Hungary19A-6).